Reading from the N-terminus, the 217-residue chain is Meiotically up-regulated gene 37 protein (217 aa).

Functionally, has a role in meiosis. The sequence is that of Meiotically up-regulated gene 37 protein (mug37) from Schizosaccharomyces pombe (strain 972 / ATCC 24843) (Fission yeast).